The following is a 236-amino-acid chain: RNA-binding protein 24 (236 aa).

The 78-residue stretch at 11–88 folds into the RRM domain; that stretch reads TKIFVGGLPY…RKANVNLAYL (78 aa). The necessary for interaction with EIF4E stretch occupies residues 175 to 199; that stretch reads QYPYAASPAAAGYVTAGGYGYAVQQ.

Interacts with EIF4E; this interaction prevents EIF4E from binding to p53/TP53 mRNA and inhibits the assembly of translation initiation complex. In terms of assembly, (Microbial infection) Interacts with HCV mature core protein; this interaction, which enhances the interaction of Core with 5'-UTR may favor viral replication over translation. As to quaternary structure, (Microbial infection) Interacts with HCV Serine protease/helicase NS3. As to expression, expressed in fetal and adult heart and skeletal muscles.

The protein resides in the nucleus. It localises to the cytoplasm. Multifunctional RNA-binding protein involved in the regulation of pre-mRNA splicing, mRNA stability and mRNA translation important for cell fate decision and differentiation. Plays a major role in pre-mRNA alternative splicing regulation. Mediates preferentially muscle-specific exon inclusion in numerous mRNAs important for striated cardiac and skeletal muscle cell differentiation. Binds to intronic splicing enhancer (ISE) composed of stretches of GU-rich motifs localized in flanking intron of exon that will be included by alternative splicing. Involved in embryonic stem cell (ESC) transition to cardiac cell differentiation by promoting pre-mRNA alternative splicing events of several pluripotency and/or differentiation genes. Plays a role in the regulation of mRNA stability. Binds to 3'-untranslated region (UTR) AU-rich elements in target transcripts, such as CDKN1A and MYOG, leading to maintain their stabilities. Involved in myogenic differentiation by regulating MYOG levels. Binds to multiple regions in the mRNA 3'-UTR of TP63 isoform 2, hence inducing its destabilization. Also promotes the destabilization of the CHRM2 mRNA via its binding to a region in the coding sequence. Plays a role in the regulation of mRNA translation. Mediates repression of p53/TP53 mRNA translation through its binding to U-rich element in the 3'-UTR, hence preventing EIF4E from binding to p53/TP53 mRNA and translation initiation. Binds to a huge amount of mRNAs. Required for embryonic heart development, sarcomer and M-band formation in striated muscles. Together with RBM20, promotes the expression of short isoforms of PDLIM5/ENH in cardiomyocytes. In terms of biological role, (Microbial infection) Promotes hepatitis C virus (HCV) replication over translation through the inhibition of viral protein expression. Decreases viral translation by linking viral 5'- and 3'-UTRs, blocking 80S ribosome assembly on the viral IRES and enhancing the interaction of the mature core protein and 5'-UTR. The sequence is that of RNA-binding protein 24 from Homo sapiens (Human).